A 90-amino-acid polypeptide reads, in one-letter code: DNA-binding protein HU (90 aa).

A Phosphothreonine modification is found at Thr4. Residues 56-90 (AARKGRNPQTGEEMEIPASKVPAFKPGKALKDAVK) are disordered.

This sequence belongs to the bacterial histone-like protein family. As to quaternary structure, homodimer.

Its function is as follows. Histone-like DNA-binding protein which is capable of wrapping DNA to stabilize it, and thus to prevent its denaturation under extreme environmental conditions. The sequence is that of DNA-binding protein HU (hup) from Geobacillus stearothermophilus (Bacillus stearothermophilus).